A 313-amino-acid chain; its full sequence is Ribosomal RNA small subunit methyltransferase H (313 aa).

S-adenosyl-L-methionine contacts are provided by residues 35–37, aspartate 55, phenylalanine 79, aspartate 101, and glutamine 108; that span reads GGH.

It belongs to the methyltransferase superfamily. RsmH family.

It is found in the cytoplasm. It carries out the reaction cytidine(1402) in 16S rRNA + S-adenosyl-L-methionine = N(4)-methylcytidine(1402) in 16S rRNA + S-adenosyl-L-homocysteine + H(+). Functionally, specifically methylates the N4 position of cytidine in position 1402 (C1402) of 16S rRNA. In Shigella flexneri, this protein is Ribosomal RNA small subunit methyltransferase H.